The sequence spans 203 residues: Small ribosomal subunit protein uS4 (203 aa).

An S4 RNA-binding domain is found at 93-153 (RRLDNVVYRL…EKSKNLQQVK (61 aa)).

It belongs to the universal ribosomal protein uS4 family. Part of the 30S ribosomal subunit. Contacts protein S5. The interaction surface between S4 and S5 is involved in control of translational fidelity.

Its function is as follows. One of the primary rRNA binding proteins, it binds directly to 16S rRNA where it nucleates assembly of the body of the 30S subunit. With S5 and S12 plays an important role in translational accuracy. This chain is Small ribosomal subunit protein uS4, found in Lactobacillus delbrueckii subsp. bulgaricus (strain ATCC 11842 / DSM 20081 / BCRC 10696 / JCM 1002 / NBRC 13953 / NCIMB 11778 / NCTC 12712 / WDCM 00102 / Lb 14).